The sequence spans 404 residues: Exodeoxyribonuclease 7 large subunit (404 aa).

The protein belongs to the XseA family. In terms of assembly, heterooligomer composed of large and small subunits.

It localises to the cytoplasm. The catalysed reaction is Exonucleolytic cleavage in either 5'- to 3'- or 3'- to 5'-direction to yield nucleoside 5'-phosphates.. Bidirectionally degrades single-stranded DNA into large acid-insoluble oligonucleotides, which are then degraded further into small acid-soluble oligonucleotides. The polypeptide is Exodeoxyribonuclease 7 large subunit (Tropheryma whipplei (strain TW08/27) (Whipple's bacillus)).